The sequence spans 157 residues: Deoxyuridine 5'-triphosphate nucleotidohydrolase (157 aa).

Residues Arg-73–Gly-75, Asn-86, and Thr-90–Asp-92 contribute to the substrate site.

Belongs to the dUTPase family. The cofactor is Mg(2+).

It catalyses the reaction dUTP + H2O = dUMP + diphosphate + H(+). It functions in the pathway pyrimidine metabolism; dUMP biosynthesis; dUMP from dCTP (dUTP route): step 2/2. Its function is as follows. This enzyme is involved in nucleotide metabolism: it produces dUMP, the immediate precursor of thymidine nucleotides and it decreases the intracellular concentration of dUTP so that uracil cannot be incorporated into DNA. The sequence is that of Deoxyuridine 5'-triphosphate nucleotidohydrolase from Azorhizobium caulinodans (strain ATCC 43989 / DSM 5975 / JCM 20966 / LMG 6465 / NBRC 14845 / NCIMB 13405 / ORS 571).